We begin with the raw amino-acid sequence, 687 residues long: Transcription activator of gluconeogenesis SNOG_12336 (687 aa).

Residues 1 to 56 are disordered; sequence MASPDAEDASPSPEYRSDLDDDMAAEQKTDDGSPSQKSSNGQKPASNAKDPLRPRR. Polar residues predominate over residues 32-45; the sequence is GSPSQKSSNGQKPA. Residues 63–91 constitute a DNA-binding region (zn(2)-C6 fungal-type); sequence CFACQRAHLTCGDERPCTRCIKRGLQDHC. 2 stretches are compositionally biased toward polar residues: residues 150–159 and 169–179; these read PSGTFYQPPS and HGRSFSDQQSP. Disordered stretches follow at residues 150-214, 300-411, and 536-561; these read PSGT…GPLF, ESQS…KRHR, and GNSREADESEMSTQTNTTPNLTGQEA. Low complexity predominate over residues 195-212; the sequence is PPSSISQGQPGQMQQFGP. Polar residues predominate over residues 300-318; that stretch reads ESQSRQNSMHIHTPTSSAT. The segment covering 342-357 has biased composition (low complexity); sequence PSSHSTASPASTDASA. Polar residues-rich tracts occupy residues 362 to 384, 392 to 402, and 546 to 561; these read NPLSTATFFANTNRGQPQRSPTT, RPPSTALQPIH, and MSTQTNTTPNLTGQEA. In terms of domain architecture, PAS spans 482–553; it reads NLMTLQDHFT…SEMSTQTNTT (72 aa).

The protein belongs to the ERT1/acuK family.

It localises to the nucleus. Functionally, transcription factor which regulates nonfermentable carbon utilization. Activator of gluconeogenetic genes. This is Transcription activator of gluconeogenesis SNOG_12336 from Phaeosphaeria nodorum (strain SN15 / ATCC MYA-4574 / FGSC 10173) (Glume blotch fungus).